We begin with the raw amino-acid sequence, 397 residues long: Elongation factor Tu (397 aa).

The region spanning 10–207 is the tr-type G domain; it reads KPHVNVGTIG…TLDAYIPEPE (198 aa). The segment at 19 to 26 is G1; that stretch reads GHVDHGKT. 19 to 26 serves as a coordination point for GTP; the sequence is GHVDHGKT. Mg(2+) is bound at residue Thr-26. Positions 60–64 are G2; that stretch reads GITIA. Positions 81 to 84 are G3; that stretch reads DCPG. Residues 81-85 and 136-139 contribute to the GTP site; these read DCPGH and NKAD. A G4 region spans residues 136-139; the sequence is NKAD. A G5 region spans residues 174 to 176; it reads SAL.

This sequence belongs to the TRAFAC class translation factor GTPase superfamily. Classic translation factor GTPase family. EF-Tu/EF-1A subfamily. As to quaternary structure, monomer.

It is found in the cytoplasm. The catalysed reaction is GTP + H2O = GDP + phosphate + H(+). Functionally, GTP hydrolase that promotes the GTP-dependent binding of aminoacyl-tRNA to the A-site of ribosomes during protein biosynthesis. The protein is Elongation factor Tu of Hahella chejuensis (strain KCTC 2396).